A 333-amino-acid polypeptide reads, in one-letter code: Probable ABC transporter permease protein y4mJ (333 aa).

Helical transmembrane passes span 30-50, 62-82, 84-104, 110-130, 133-153, 175-195, 228-248, 253-273, 274-294, and 300-320; these read LAIA…VPQA, AGAP…TGGI, LSVG…MASG, ALIG…LVTV, LAPF…AFIV, IPGV…IEIF, FAYV…ISYI, STAG…GGAS, LLGG…ITVI, and LIGI…LIAV.

This sequence belongs to the binding-protein-dependent transport system permease family. AraH/RbsC subfamily.

Its subcellular location is the cell inner membrane. Probably part of the binding-protein-dependent transport system y4mIJK. This system probably transports a sugar. Probably responsible for the translocation of the substrate across the membrane. The polypeptide is Probable ABC transporter permease protein y4mJ (Sinorhizobium fredii (strain NBRC 101917 / NGR234)).